The chain runs to 318 residues: DNA-directed RNA polymerase subunit alpha (318 aa).

Residues 1–232 form an alpha N-terminal domain (alpha-NTD) region; the sequence is MAHQRIVGPT…NLFSPLQNVR (232 aa). The tract at residues 246–318 is alpha C-terminal domain (alpha-CTD); that stretch reads KMTEVLVEEL…HLPKEKFTKD (73 aa).

This sequence belongs to the RNA polymerase alpha chain family. In plastids the minimal PEP RNA polymerase catalytic core is composed of four subunits: alpha, beta, beta', and beta''. When a (nuclear-encoded) sigma factor is associated with the core the holoenzyme is formed, which can initiate transcription.

The protein localises to the plastid. The protein resides in the chloroplast. It carries out the reaction RNA(n) + a ribonucleoside 5'-triphosphate = RNA(n+1) + diphosphate. Functionally, DNA-dependent RNA polymerase catalyzes the transcription of DNA into RNA using the four ribonucleoside triphosphates as substrates. This is DNA-directed RNA polymerase subunit alpha from Chlorokybus atmophyticus (Soil alga).